We begin with the raw amino-acid sequence, 521 residues long: Apolipoprotein N-acyltransferase (521 aa).

6 consecutive transmembrane segments (helical) span residues 34–54 (LAAP…PLLV), 64–84 (AFWL…RWLL), 100–120 (LAIA…VIGL), 137–157 (LFAV…ETAF), 176–196 (VALG…ALVA), and 206–226 (YAGL…WQLA). One can recognise a CN hydrolase domain in the interval 240-480 (IQGNIAQARK…YAAFVEPVRL (241 aa)). E281 acts as the Proton acceptor in catalysis. K341 is a catalytic residue. C392 acts as the Nucleophile in catalysis. A helical membrane pass occupies residues 488 to 508 (ALWGDWFVPLSAALALLGLIA).

This sequence belongs to the CN hydrolase family. Apolipoprotein N-acyltransferase subfamily.

Its subcellular location is the cell inner membrane. It carries out the reaction N-terminal S-1,2-diacyl-sn-glyceryl-L-cysteinyl-[lipoprotein] + a glycerophospholipid = N-acyl-S-1,2-diacyl-sn-glyceryl-L-cysteinyl-[lipoprotein] + a 2-acyl-sn-glycero-3-phospholipid + H(+). It participates in protein modification; lipoprotein biosynthesis (N-acyl transfer). Its function is as follows. Catalyzes the phospholipid dependent N-acylation of the N-terminal cysteine of apolipoprotein, the last step in lipoprotein maturation. The protein is Apolipoprotein N-acyltransferase of Gloeobacter violaceus (strain ATCC 29082 / PCC 7421).